The primary structure comprises 35 residues: Unknown protein 14 from 2D-PAGE (35 aa).

Residues 1–35 (VVXXQTLXDXRGIYGDQGSIGPXXIXGLQGDRDAD) are disordered.

This chain is Unknown protein 14 from 2D-PAGE, found in Bombyx mori (Silk moth).